A 406-amino-acid polypeptide reads, in one-letter code: COP9 signalosome complex subunit 4 (406 aa).

Ala2 bears the N-acetylalanine mark. Lys25 carries the post-translational modification N6-acetyllysine. In terms of domain architecture, PCI spans 197 to 366 (YRRKFIEAAQ…GIVHFETREA (170 aa)).

This sequence belongs to the CSN4 family. In terms of assembly, component of the CSN complex, composed of COPS1/GPS1, COPS2, COPS3, COPS4, COPS5, COPS6, COPS7 (COPS7A or COPS7B), COPS8 and COPS9 isoform 1. In the complex, it probably interacts directly with COPS1, COPS2, COPS3, COPS5, COPS6, COPS7 (COPS7A or COPS7B) and COPS8. Interacts with TOR1A; the interaction is direct and associates TOR1A and SNAPIN with the CSN complex. Interacts with STON2; controls STON2 neddylation levels. Interacts with ERCC6.

It localises to the cytoplasm. The protein resides in the nucleus. The protein localises to the cytoplasmic vesicle. Its subcellular location is the secretory vesicle. It is found in the synaptic vesicle. Functionally, component of the COP9 signalosome complex (CSN), a complex involved in various cellular and developmental processes. The CSN complex is an essential regulator of the ubiquitin (Ubl) conjugation pathway by mediating the deneddylation of the cullin subunits of SCF-type E3 ligase complexes, leading to decrease the Ubl ligase activity of SCF-type complexes such as SCF, CSA or DDB2. Also involved in the deneddylation of non-cullin subunits such as STON2. The complex is also involved in phosphorylation of p53/TP53, c-jun/JUN, IkappaBalpha/NFKBIA, ITPK1, IRF8/ICSBP and SNAPIN, possibly via its association with CK2 and PKD kinases. CSN-dependent phosphorylation of TP53 and JUN promotes and protects degradation by the Ubl system, respectively. The protein is COP9 signalosome complex subunit 4 (COPS4) of Homo sapiens (Human).